The chain runs to 46 residues: Protein krueppel (46 aa).

C2H2-type zinc fingers lie at residues 1-4, 10-32, and 38-46; these read MRLH, YHCTHCERQFVQVANLRRHLRVH, and YACELCTSK.

This sequence belongs to the krueppel C2H2-type zinc-finger protein family.

The protein resides in the nucleus. Its function is as follows. Krueppel is a gap class segmentation protein. In Lithobius forficatus (Centipede), this protein is Protein krueppel (Kr).